The following is a 37-amino-acid chain: Large ribosomal subunit protein bL36 (37 aa).

Belongs to the bacterial ribosomal protein bL36 family.

In Mycoplasmopsis synoviae (strain 53) (Mycoplasma synoviae), this protein is Large ribosomal subunit protein bL36.